A 478-amino-acid polypeptide reads, in one-letter code: Catalase easC (478 aa).

Residue His-54 is part of the active site. Tyr-343 is a binding site for heme. Residues 459–478 are disordered; sequence VAEKARPDSPSRAQPGQLRL.

It belongs to the catalase family. Heme is required as a cofactor.

It functions in the pathway alkaloid biosynthesis; ergot alkaloid biosynthesis. Functionally, catalase; part of the gene cluster that mediates the biosynthesis of fungal ergot alkaloid. DmaW catalyzes the first step of ergot alkaloid biosynthesis by condensing dimethylallyl diphosphate (DMAP) and tryptophan to form 4-dimethylallyl-L-tryptophan. The second step is catalyzed by the methyltransferase easF that methylates 4-dimethylallyl-L-tryptophan in the presence of S-adenosyl-L-methionine, resulting in the formation of 4-dimethylallyl-L-abrine. The catalase easC and the FAD-dependent oxidoreductase easE then transform 4-dimethylallyl-L-abrine to chanoclavine-I which is further oxidized by easD in the presence of NAD(+), resulting in the formation of chanoclavine-I aldehyde. Chanoclavine-I aldehyde is the precursor of ergoamides and ergopeptines in Clavicipitaceae, and clavine-type alcaloids such as fumiclavine in Trichocomaceae. However, the metabolites downstream of chanoclavine-I aldehyde in Arthrodermataceae have not been identified yet. The protein is Catalase easC of Arthroderma benhamiae (strain ATCC MYA-4681 / CBS 112371) (Trichophyton mentagrophytes).